A 431-amino-acid chain; its full sequence is RNA-binding motif, single-stranded-interacting protein 3 (431 aa).

Residues 28 to 53 form a disordered region; the sequence is YAPAPHPMAPPSPSTNSSSNSSGEQL. Residues 31 to 40 are compositionally biased toward pro residues; that stretch reads APHPMAPPSP. 2 RRM domains span residues 56 to 129 and 135 to 220; these read TNLY…MAKQ and TNLY…FADG. Disordered regions lie at residues 220–242 and 393–431; these read GGQK…PREG and TSPQ…QSKP. The segment covering 401-411 has biased composition (low complexity); it reads SSQDSSGQQQQ.

It localises to the cytoplasm. Its function is as follows. Binds poly(A) and poly(U) oligoribonucleotides. In Mus musculus (Mouse), this protein is RNA-binding motif, single-stranded-interacting protein 3 (Rbms3).